The following is a 252-amino-acid chain: 2-succinyl-6-hydroxy-2,4-cyclohexadiene-1-carboxylate synthase (252 aa).

It belongs to the AB hydrolase superfamily. MenH family. As to quaternary structure, monomer.

It catalyses the reaction 5-enolpyruvoyl-6-hydroxy-2-succinyl-cyclohex-3-ene-1-carboxylate = (1R,6R)-6-hydroxy-2-succinyl-cyclohexa-2,4-diene-1-carboxylate + pyruvate. It functions in the pathway quinol/quinone metabolism; 1,4-dihydroxy-2-naphthoate biosynthesis; 1,4-dihydroxy-2-naphthoate from chorismate: step 3/7. It participates in quinol/quinone metabolism; menaquinone biosynthesis. Catalyzes a proton abstraction reaction that results in 2,5-elimination of pyruvate from 2-succinyl-5-enolpyruvyl-6-hydroxy-3-cyclohexene-1-carboxylate (SEPHCHC) and the formation of 2-succinyl-6-hydroxy-2,4-cyclohexadiene-1-carboxylate (SHCHC). This chain is 2-succinyl-6-hydroxy-2,4-cyclohexadiene-1-carboxylate synthase, found in Escherichia coli (strain ATCC 8739 / DSM 1576 / NBRC 3972 / NCIMB 8545 / WDCM 00012 / Crooks).